Reading from the N-terminus, the 508-residue chain is Mitochondrial distribution and morphology protein 10 (508 aa).

The interval 160 to 195 (PAHPTSTRPTPPQTPPSHTRQPSEPSTPAPSPTPGN) is disordered.

It belongs to the MDM10 family. In terms of assembly, component of the ER-mitochondria encounter structure (ERMES) or MDM complex, composed of MMM1, MDM10, MDM12 and MDM34. Associates with the mitochondrial outer membrane sorting assembly machinery SAM(core) complex.

The protein resides in the mitochondrion outer membrane. Component of the ERMES/MDM complex, which serves as a molecular tether to connect the endoplasmic reticulum and mitochondria. Components of this complex are involved in the control of mitochondrial shape and protein biogenesis and may function in phospholipid exchange. MDM10 is involved in the late assembly steps of the general translocase of the mitochondrial outer membrane (TOM complex). Functions in the TOM40-specific route of the assembly of outer membrane beta-barrel proteins, including the association of TOM40 with the receptor TOM22 and small TOM proteins. Can associate with the SAM(core) complex as well as the MDM12-MMM1 complex, both involved in late steps of the major beta-barrel assembly pathway, that is responsible for biogenesis of all outer membrane beta-barrel proteins. May act as a switch that shuttles between both complexes and channels precursor proteins into the TOM40-specific pathway. Plays a role in mitochondrial morphology and in the inheritance of mitochondria. This chain is Mitochondrial distribution and morphology protein 10, found in Cryptococcus neoformans var. neoformans serotype D (strain B-3501A) (Filobasidiella neoformans).